The chain runs to 86 residues: Small ribosomal subunit protein bS16 (86 aa).

The protein belongs to the bacterial ribosomal protein bS16 family.

This chain is Small ribosomal subunit protein bS16, found in Syntrophotalea carbinolica (strain DSM 2380 / NBRC 103641 / GraBd1) (Pelobacter carbinolicus).